The chain runs to 82 residues: Large ribosomal subunit protein bL27 (82 aa).

The tract at residues 1-26 (MAHKKGQGASRNGRDSESKRLGMKVG) is disordered.

Belongs to the bacterial ribosomal protein bL27 family.

In Chlamydia felis (strain Fe/C-56) (Chlamydophila felis), this protein is Large ribosomal subunit protein bL27.